Consider the following 299-residue polypeptide: Acetylglutamate kinase (299 aa).

Substrate contacts are provided by residues 68-69 (GG), arginine 90, and asparagine 194.

Belongs to the acetylglutamate kinase family. ArgB subfamily.

It is found in the cytoplasm. It catalyses the reaction N-acetyl-L-glutamate + ATP = N-acetyl-L-glutamyl 5-phosphate + ADP. The protein operates within amino-acid biosynthesis; L-arginine biosynthesis; N(2)-acetyl-L-ornithine from L-glutamate: step 2/4. Catalyzes the ATP-dependent phosphorylation of N-acetyl-L-glutamate. The polypeptide is Acetylglutamate kinase (Psychrobacter cryohalolentis (strain ATCC BAA-1226 / DSM 17306 / VKM B-2378 / K5)).